A 503-amino-acid polypeptide reads, in one-letter code: UDP-N-acetylmuramate--L-alanine ligase (503 aa).

The tract at residues 1-22 is disordered; sequence MIKQTHVSNSSNNSTNSTAAQV. The span at 8 to 18 shows a compositional bias: low complexity; it reads SNSSNNSTNST. Position 135-141 (135-141) interacts with ATP; that stretch reads GTHGKTT.

It belongs to the MurCDEF family.

The protein localises to the cytoplasm. The enzyme catalyses UDP-N-acetyl-alpha-D-muramate + L-alanine + ATP = UDP-N-acetyl-alpha-D-muramoyl-L-alanine + ADP + phosphate + H(+). It participates in cell wall biogenesis; peptidoglycan biosynthesis. Its function is as follows. Cell wall formation. This Colwellia psychrerythraea (strain 34H / ATCC BAA-681) (Vibrio psychroerythus) protein is UDP-N-acetylmuramate--L-alanine ligase.